The sequence spans 404 residues: Queuine tRNA-ribosyltransferase catalytic subunit (404 aa).

Aspartate 98 serves as the catalytic Proton acceptor. Residues 98–102 (DSGGF), aspartate 152, glutamine 195, and glycine 222 each bind substrate. Residues 253-259 (GVGYAED) form an RNA binding region. The Nucleophile role is filled by aspartate 272. Positions 277–281 (TRTAR) are RNA binding; important for wobble base 34 recognition. 4 residues coordinate Zn(2+): cysteine 310, cysteine 312, cysteine 315, and histidine 347.

It belongs to the queuine tRNA-ribosyltransferase family. As to quaternary structure, heterodimer of a catalytic subunit and an accessory subunit. Requires Zn(2+) as cofactor.

It is found in the cytoplasm. The protein localises to the nucleus. It carries out the reaction guanosine(34) in tRNA + queuine = queuosine(34) in tRNA + guanine. Its function is as follows. Catalytic subunit of the queuine tRNA-ribosyltransferase (TGT) that catalyzes the base-exchange of a guanine (G) residue with queuine (Q) at position 34 (anticodon wobble position) in tRNAs with GU(N) anticodons (tRNA-Asp, -Asn, -His and -Tyr), resulting in the hypermodified nucleoside queuosine (7-(((4,5-cis-dihydroxy-2-cyclopenten-1-yl)amino)methyl)-7-deazaguanosine). Catalysis occurs through a double-displacement mechanism. The nucleophile active site attacks the C1' of nucleotide 34 to detach the guanine base from the RNA, forming a covalent enzyme-RNA intermediate. The proton acceptor active site deprotonates the incoming queuine, allowing a nucleophilic attack on the C1' of the ribose to form the product. This Schizosaccharomyces pombe (strain 972 / ATCC 24843) (Fission yeast) protein is Queuine tRNA-ribosyltransferase catalytic subunit.